Reading from the N-terminus, the 28-residue chain is Ranatuerin-2LTa (28 aa).

Residues C23 and C28 are joined by a disulfide bond.

Expressed by the skin glands.

The protein localises to the secreted. Its function is as follows. Has antibacterial activity. This chain is Ranatuerin-2LTa, found in Rana latastei (Italian agile frog).